A 159-amino-acid chain; its full sequence is Ornithine decarboxylase antizyme (159 aa).

Belongs to the ODC antizyme family. As to quaternary structure, interacts with ODC1 and thereby sterically blocks ODC homodimerization.

Ornithine decarboxylase (ODC) antizyme protein that negatively regulates ODC activity and intracellular polyamine biosynthesis and uptake in response to increased intracellular polyamine levels. Binds to ODC monomers, inhibiting the assembly of the functional ODC homodimer, and targets the monomers for ubiquitin-independent proteolytic destruction by the 26S proteasome. The protein is Ornithine decarboxylase antizyme of Caenorhabditis elegans.